Consider the following 112-residue polypeptide: Protein lin-52 homolog (112 aa).

This sequence belongs to the lin-52 family. In terms of assembly, component of the DREAM complex. Expressed in the brain, liver and retina. Highly expressed in the retinal ganglion cell and inner nuclear layers at the parr stage. Expressed at a lower level in inner segments of some retinal photoreceptors.

In terms of biological role, may be involved in retinal development. The polypeptide is Protein lin-52 homolog (lin52) (Oncorhynchus mykiss (Rainbow trout)).